We begin with the raw amino-acid sequence, 31 residues long: Morintide mO3 (31 aa).

A Chitin-binding type-1 domain is found at 1–30; the sequence is NRLCCSQYGFCGTTSEYCSRANGCQSNCWG. 2 disulfide bridges follow: C4–C18 and C24–C28.

Seeds (at protein level).

In terms of biological role, chitin-binding protein which functions in defense against chitin-containing fungal pathogens. In Moringa oleifera (Horseradish tree), this protein is Morintide mO3.